We begin with the raw amino-acid sequence, 164 residues long: Putative 4-hydroxy-4-methyl-2-oxoglutarate aldolase (164 aa).

Residues 79–82 (GDRL) and R101 each bind substrate. D102 is a binding site for a divalent metal cation.

The protein belongs to the class II aldolase/RraA-like family. In terms of assembly, homotrimer. A divalent metal cation serves as cofactor.

It catalyses the reaction 4-hydroxy-4-methyl-2-oxoglutarate = 2 pyruvate. The enzyme catalyses oxaloacetate + H(+) = pyruvate + CO2. Functionally, catalyzes the aldol cleavage of 4-hydroxy-4-methyl-2-oxoglutarate (HMG) into 2 molecules of pyruvate. Also contains a secondary oxaloacetate (OAA) decarboxylase activity due to the common pyruvate enolate transition state formed following C-C bond cleavage in the retro-aldol and decarboxylation reactions. This Halorhodospira halophila (strain DSM 244 / SL1) (Ectothiorhodospira halophila (strain DSM 244 / SL1)) protein is Putative 4-hydroxy-4-methyl-2-oxoglutarate aldolase.